The following is a 333-amino-acid chain: Ig gamma-2B chain C region (333 aa).

Ig-like domains are found at residues 6-96 (PSVY…KKVE), 124-223 (PSVF…KTIS), and 232-328 (PQVY…KSIS). Disulfide bonds link Cys27-Cys80, Cys147-Cys207, and Cys253-Cys311.

This chain is Ig gamma-2B chain C region (Igh-1a), found in Rattus norvegicus (Rat).